A 257-amino-acid chain; its full sequence is Global transcriptional regulator CodY (257 aa).

A GAF domain region spans residues 1 to 155 (MSLLSKTREL…AATVIGMEIL (155 aa)). A DNA-binding region (H-T-H motif) is located at residues 203–222 (ASKVADRVGITRSVIVNALR).

It belongs to the CodY family.

Its subcellular location is the cytoplasm. Functionally, DNA-binding global transcriptional regulator which is involved in the adaptive response to starvation and acts by directly or indirectly controlling the expression of numerous genes in response to nutrient availability. During rapid exponential growth, CodY is highly active and represses genes whose products allow adaptation to nutrient depletion. This Staphylococcus haemolyticus (strain JCSC1435) protein is Global transcriptional regulator CodY.